The chain runs to 417 residues: NADH-quinone oxidoreductase subunit D (417 aa).

Belongs to the complex I 49 kDa subunit family. As to quaternary structure, NDH-1 is composed of 14 different subunits. Subunits NuoB, C, D, E, F, and G constitute the peripheral sector of the complex.

The protein localises to the cell inner membrane. The enzyme catalyses a quinone + NADH + 5 H(+)(in) = a quinol + NAD(+) + 4 H(+)(out). Functionally, NDH-1 shuttles electrons from NADH, via FMN and iron-sulfur (Fe-S) centers, to quinones in the respiratory chain. The immediate electron acceptor for the enzyme in this species is believed to be ubiquinone. Couples the redox reaction to proton translocation (for every two electrons transferred, four hydrogen ions are translocated across the cytoplasmic membrane), and thus conserves the redox energy in a proton gradient. The protein is NADH-quinone oxidoreductase subunit D of Halorhodospira halophila (strain DSM 244 / SL1) (Ectothiorhodospira halophila (strain DSM 244 / SL1)).